Here is a 422-residue protein sequence, read N- to C-terminus: NADH-quinone oxidoreductase subunit F (422 aa).

A disordered region spans residues 1 to 26; it reads MLKEEDKIFTNLHGQQSHDLKSSKKR. Residues 16 to 26 show a composition bias toward basic and acidic residues; that stretch reads QSHDLKSSKKR. 54–63 is an NAD(+) binding site; the sequence is GRGGAGFSTG. 166 to 213 is an FMN binding site; that stretch reads GAGAYICGEETALLESLEGKKGMPRLKPPFPAGFGLYGCPTTINNVES. Residues C344, C347, C350, and C390 each contribute to the [4Fe-4S] cluster site.

Belongs to the complex I 51 kDa subunit family. FMN serves as cofactor. The cofactor is [4Fe-4S] cluster.

It catalyses the reaction a quinone + NADH + 5 H(+)(in) = a quinol + NAD(+) + 4 H(+)(out). In terms of biological role, NDH-1 shuttles electrons from NADH, via FMN and iron-sulfur (Fe-S) centers, to quinones in the respiratory chain. Couples the redox reaction to proton translocation (for every two electrons transferred, four hydrogen ions are translocated across the cytoplasmic membrane), and thus conserves the redox energy in a proton gradient. In Rickettsia felis (strain ATCC VR-1525 / URRWXCal2) (Rickettsia azadi), this protein is NADH-quinone oxidoreductase subunit F (nuoF).